A 217-amino-acid chain; its full sequence is uncharacterized protein (217 aa).

The next 7 helical transmembrane spans lie at 4–23, 44–66, 76–98, 111–128, 132–154, 166–188, and 198–215; these read IYGI…GKET, NVVI…LTWV, TVET…SIII, FLYL…IHAI, MAMV…PLAL, AGTA…IVLF, and LLLS…ALQL.

The protein resides in the cell membrane. This is an uncharacterized protein from Archaeoglobus fulgidus (strain ATCC 49558 / DSM 4304 / JCM 9628 / NBRC 100126 / VC-16).